Reading from the N-terminus, the 499-residue chain is Apolipoprotein N-acyltransferase (499 aa).

6 consecutive transmembrane segments (helical) span residues valine 17–leucine 37, leucine 38–leucine 58, alanine 84–leucine 104, isoleucine 131–glycine 151, leucine 163–leucine 183, and arginine 198–leucine 218. Positions tryptophan 232 to phenylalanine 458 constitute a CN hydrolase domain. Residue glutamate 273 is the Proton acceptor of the active site. The active site involves lysine 322. Cysteine 370 functions as the Nucleophile in the catalytic mechanism. A helical membrane pass occupies residues isoleucine 474–isoleucine 494.

It belongs to the CN hydrolase family. Apolipoprotein N-acyltransferase subfamily.

The protein resides in the cell inner membrane. It catalyses the reaction N-terminal S-1,2-diacyl-sn-glyceryl-L-cysteinyl-[lipoprotein] + a glycerophospholipid = N-acyl-S-1,2-diacyl-sn-glyceryl-L-cysteinyl-[lipoprotein] + a 2-acyl-sn-glycero-3-phospholipid + H(+). It functions in the pathway protein modification; lipoprotein biosynthesis (N-acyl transfer). Catalyzes the phospholipid dependent N-acylation of the N-terminal cysteine of apolipoprotein, the last step in lipoprotein maturation. The sequence is that of Apolipoprotein N-acyltransferase from Prochlorococcus marinus (strain MIT 9313).